Consider the following 156-residue polypeptide: Small ribosomal subunit protein uS7 (156 aa).

The protein belongs to the universal ribosomal protein uS7 family. Part of the 30S ribosomal subunit. Contacts proteins S9 and S11.

In terms of biological role, one of the primary rRNA binding proteins, it binds directly to 16S rRNA where it nucleates assembly of the head domain of the 30S subunit. Is located at the subunit interface close to the decoding center, probably blocks exit of the E-site tRNA. The sequence is that of Small ribosomal subunit protein uS7 from Thermoanaerobacter sp. (strain X514).